The primary structure comprises 117 residues: Large ribosomal subunit protein bL19 (117 aa).

It belongs to the bacterial ribosomal protein bL19 family.

Functionally, this protein is located at the 30S-50S ribosomal subunit interface and may play a role in the structure and function of the aminoacyl-tRNA binding site. In Sorangium cellulosum (strain So ce56) (Polyangium cellulosum (strain So ce56)), this protein is Large ribosomal subunit protein bL19.